A 364-amino-acid polypeptide reads, in one-letter code: Aminomethyltransferase (364 aa).

This sequence belongs to the GcvT family. As to quaternary structure, the glycine cleavage system is composed of four proteins: P, T, L and H.

The catalysed reaction is N(6)-[(R)-S(8)-aminomethyldihydrolipoyl]-L-lysyl-[protein] + (6S)-5,6,7,8-tetrahydrofolate = N(6)-[(R)-dihydrolipoyl]-L-lysyl-[protein] + (6R)-5,10-methylene-5,6,7,8-tetrahydrofolate + NH4(+). Functionally, the glycine cleavage system catalyzes the degradation of glycine. In Thermotoga petrophila (strain ATCC BAA-488 / DSM 13995 / JCM 10881 / RKU-1), this protein is Aminomethyltransferase.